The primary structure comprises 272 residues: 2-succinyl-6-hydroxy-2,4-cyclohexadiene-1-carboxylate synthase (272 aa).

Belongs to the AB hydrolase superfamily. MenH family. As to quaternary structure, monomer.

The catalysed reaction is 5-enolpyruvoyl-6-hydroxy-2-succinyl-cyclohex-3-ene-1-carboxylate = (1R,6R)-6-hydroxy-2-succinyl-cyclohexa-2,4-diene-1-carboxylate + pyruvate. Its pathway is quinol/quinone metabolism; 1,4-dihydroxy-2-naphthoate biosynthesis; 1,4-dihydroxy-2-naphthoate from chorismate: step 3/7. It participates in quinol/quinone metabolism; menaquinone biosynthesis. In terms of biological role, catalyzes a proton abstraction reaction that results in 2,5-elimination of pyruvate from 2-succinyl-5-enolpyruvyl-6-hydroxy-3-cyclohexene-1-carboxylate (SEPHCHC) and the formation of 2-succinyl-6-hydroxy-2,4-cyclohexadiene-1-carboxylate (SHCHC). This Yersinia pseudotuberculosis serotype I (strain IP32953) protein is 2-succinyl-6-hydroxy-2,4-cyclohexadiene-1-carboxylate synthase.